The following is a 317-amino-acid chain: WD repeat-containing protein 82 (317 aa).

WD repeat units follow at residues Glu-21–Thr-60, Gly-107–Leu-146, His-148–Phe-186, Glu-194–Thr-233, Pro-238–Val-278, and Asp-282–Leu-317.

The protein belongs to the WD repeat SWD2 family. Component of the SET1 complex, composed at least of the catalytic subunit Set1, wds/WDR5, Wdr82, Rbbp5, ash2, Cfp1/CXXC1, hcf and Dpy-30L1. Interacts with male-specific lethal (MSL) histone acetyltransferase complex at least composed of mof, msl-1, msl-2 and msl-3. Interacts with su(sable).

It localises to the nucleus. Component of the SET1 complex that specifically di- and trimethylates 'Lys-4' of histone H3. Together with su(sable), part of a transcription termination checkpoint that promotes transcription termination of aberrant RNAs and their subsequent degradation by the nuclear exosome. The polypeptide is WD repeat-containing protein 82 (Drosophila melanogaster (Fruit fly)).